A 503-amino-acid chain; its full sequence is Probable cytosol aminopeptidase (503 aa).

Mn(2+) contacts are provided by Lys-270 and Asp-275. Lys-282 is a catalytic residue. Positions 293, 352, and 354 each coordinate Mn(2+). Arg-356 is an active-site residue.

This sequence belongs to the peptidase M17 family. Requires Mn(2+) as cofactor.

The protein localises to the cytoplasm. It catalyses the reaction Release of an N-terminal amino acid, Xaa-|-Yaa-, in which Xaa is preferably Leu, but may be other amino acids including Pro although not Arg or Lys, and Yaa may be Pro. Amino acid amides and methyl esters are also readily hydrolyzed, but rates on arylamides are exceedingly low.. It carries out the reaction Release of an N-terminal amino acid, preferentially leucine, but not glutamic or aspartic acids.. Presumably involved in the processing and regular turnover of intracellular proteins. Catalyzes the removal of unsubstituted N-terminal amino acids from various peptides. This is Probable cytosol aminopeptidase from Klebsiella pneumoniae subsp. pneumoniae (strain ATCC 700721 / MGH 78578).